A 284-amino-acid polypeptide reads, in one-letter code: Bifunctional protein FolD 1 (284 aa).

Residues 166–168 (GAS), S191, and I232 contribute to the NADP(+) site.

It belongs to the tetrahydrofolate dehydrogenase/cyclohydrolase family. In terms of assembly, homodimer.

The enzyme catalyses (6R)-5,10-methylene-5,6,7,8-tetrahydrofolate + NADP(+) = (6R)-5,10-methenyltetrahydrofolate + NADPH. It catalyses the reaction (6R)-5,10-methenyltetrahydrofolate + H2O = (6R)-10-formyltetrahydrofolate + H(+). Its pathway is one-carbon metabolism; tetrahydrofolate interconversion. In terms of biological role, catalyzes the oxidation of 5,10-methylenetetrahydrofolate to 5,10-methenyltetrahydrofolate and then the hydrolysis of 5,10-methenyltetrahydrofolate to 10-formyltetrahydrofolate. This chain is Bifunctional protein FolD 1, found in Hydrogenovibrio crunogenus (strain DSM 25203 / XCL-2) (Thiomicrospira crunogena).